Reading from the N-terminus, the 636-residue chain is Threonine--tRNA ligase (636 aa).

The TGS domain occupies 1–63 (MSSISIALPD…KDDSRVEIIT (63 aa)). The tract at residues 243 to 534 (DHRRLGRELD…LIEHYAGNFP (292 aa)) is catalytic. 3 residues coordinate Zn(2+): cysteine 335, histidine 386, and histidine 511.

The protein belongs to the class-II aminoacyl-tRNA synthetase family. Homodimer. Requires Zn(2+) as cofactor.

It is found in the cytoplasm. The catalysed reaction is tRNA(Thr) + L-threonine + ATP = L-threonyl-tRNA(Thr) + AMP + diphosphate + H(+). Catalyzes the attachment of threonine to tRNA(Thr) in a two-step reaction: L-threonine is first activated by ATP to form Thr-AMP and then transferred to the acceptor end of tRNA(Thr). Also edits incorrectly charged L-seryl-tRNA(Thr). In Pelobacter propionicus (strain DSM 2379 / NBRC 103807 / OttBd1), this protein is Threonine--tRNA ligase.